We begin with the raw amino-acid sequence, 421 residues long: Histidine--tRNA ligase (421 aa).

Belongs to the class-II aminoacyl-tRNA synthetase family. As to quaternary structure, homodimer.

The protein localises to the cytoplasm. The enzyme catalyses tRNA(His) + L-histidine + ATP = L-histidyl-tRNA(His) + AMP + diphosphate + H(+). The chain is Histidine--tRNA ligase from Solidesulfovibrio magneticus (strain ATCC 700980 / DSM 13731 / RS-1) (Desulfovibrio magneticus).